Reading from the N-terminus, the 33-residue chain is Brevinin-2HSa (33 aa).

A disulfide bridge connects residues Cys-27 and Cys-33.

As to expression, expressed by the skin glands.

The protein localises to the secreted. Functionally, has antibacterial activity against the Gram-positive bacterium S.aureus ATCC 25923 (MIC=18 uM) and the Gram-negative bacterium E.coli ATCC 25726 (MIC=36 uM). This is Brevinin-2HSa from Odorrana hosii (Hose's rock frog).